Reading from the N-terminus, the 502-residue chain is ATP synthase subunit alpha (502 aa).

169 to 176 (GDRQTGKT) lines the ATP pocket.

The protein belongs to the ATPase alpha/beta chains family. In terms of assembly, F-type ATPases have 2 components, CF(1) - the catalytic core - and CF(0) - the membrane proton channel. CF(1) has five subunits: alpha(3), beta(3), gamma(1), delta(1), epsilon(1). CF(0) has three main subunits: a(1), b(2) and c(9-12). The alpha and beta chains form an alternating ring which encloses part of the gamma chain. CF(1) is attached to CF(0) by a central stalk formed by the gamma and epsilon chains, while a peripheral stalk is formed by the delta and b chains.

The protein resides in the cell membrane. The enzyme catalyses ATP + H2O + 4 H(+)(in) = ADP + phosphate + 5 H(+)(out). Functionally, produces ATP from ADP in the presence of a proton gradient across the membrane. The alpha chain is a regulatory subunit. The polypeptide is ATP synthase subunit alpha (Clostridium perfringens (strain ATCC 13124 / DSM 756 / JCM 1290 / NCIMB 6125 / NCTC 8237 / Type A)).